We begin with the raw amino-acid sequence, 347 residues long: MDENKKKALEAALGQIEKQFGKGSIMRMGDKGAIRDIDSVSTGSLGLDVALGIGGLPRGRVVEIYGPESSGKTTLTLHAIAEMQKMGGTAAFVDAEHALDPIYAEKLGVDIDNLLVSQPDTGEQALEITDSLVRSGAVDIVIVDSVAALTPKAEIEGDMGDSHMGLQARLMSQALRKLTANIKRTNTLVIFINQIRMKIGVMFGNPETTTGGNALKFYSSVRLDIRRIGAIKKGDEILGNETRVKVVKNKVSPPFKQVEFEILYGQGISREGEVIDLGVKEKLIEKAGAWYSYQGQKIGQGKDNVRQFLKDNPDIYETLQVQIKERLMPKPNAPKATDEALDETGTD.

66-73 (GPESSGKT) contacts ATP. Residues 328-347 (MPKPNAPKATDEALDETGTD) form a disordered region.

This sequence belongs to the RecA family.

The protein localises to the cytoplasm. Can catalyze the hydrolysis of ATP in the presence of single-stranded DNA, the ATP-dependent uptake of single-stranded DNA by duplex DNA, and the ATP-dependent hybridization of homologous single-stranded DNAs. It interacts with LexA causing its activation and leading to its autocatalytic cleavage. The protein is Protein RecA of Hydrogenovibrio crunogenus (strain DSM 25203 / XCL-2) (Thiomicrospira crunogena).